The sequence spans 59 residues: Large ribosomal subunit protein uL30 (59 aa).

This sequence belongs to the universal ribosomal protein uL30 family. As to quaternary structure, part of the 50S ribosomal subunit.

In Geobacter sulfurreducens (strain ATCC 51573 / DSM 12127 / PCA), this protein is Large ribosomal subunit protein uL30.